A 213-amino-acid polypeptide reads, in one-letter code: Deoxyribose-phosphate aldolase (213 aa).

Asp-89 (proton donor/acceptor) is an active-site residue. Residue Lys-151 is the Schiff-base intermediate with acetaldehyde of the active site. The active-site Proton donor/acceptor is Lys-180.

Belongs to the DeoC/FbaB aldolase family. DeoC type 1 subfamily.

Its subcellular location is the cytoplasm. It carries out the reaction 2-deoxy-D-ribose 5-phosphate = D-glyceraldehyde 3-phosphate + acetaldehyde. It functions in the pathway carbohydrate degradation; 2-deoxy-D-ribose 1-phosphate degradation; D-glyceraldehyde 3-phosphate and acetaldehyde from 2-deoxy-alpha-D-ribose 1-phosphate: step 2/2. Catalyzes a reversible aldol reaction between acetaldehyde and D-glyceraldehyde 3-phosphate to generate 2-deoxy-D-ribose 5-phosphate. The polypeptide is Deoxyribose-phosphate aldolase (Finegoldia magna (strain ATCC 29328 / DSM 20472 / WAL 2508) (Peptostreptococcus magnus)).